The chain runs to 128 residues: Calcitonin gene-related peptide 1 (128 aa).

Residues 1–25 form the signal peptide; it reads MGLWKSSPFLAFSILVLCQAGGLQA. Residues 26–80 constitute a propeptide that is removed on maturation; it reads APFRSALEGLPDPTALSEKEGRLLLAALVKAYVQRKNELEQEQEQETEGSSITAQ. Residues 63 to 83 form a disordered region; the sequence is ELEQEQEQETEGSSITAQKRS. Positions 74–83 are enriched in polar residues; that stretch reads GSSITAQKRS. Cysteines 84 and 89 form a disulfide. Position 119 is a phenylalanine amide (Phe-119). The propeptide occupies 125 to 128; it reads DLRA.

Belongs to the calcitonin family.

It is found in the secreted. CGRP1/CALCA is a peptide hormone that induces vasodilation mediated by the CALCRL-RAMP1 receptor complex. Dilates a variety of vessels including the coronary, cerebral and systemic vasculature. Its abundance in the CNS also points toward a neurotransmitter or neuromodulator role. It also elevates platelet cAMP. CGRP1 can also bind and activate CALCR-RAMP1 (AMYR1) receptor complex. In Canis lupus familiaris (Dog), this protein is Calcitonin gene-related peptide 1 (CALCA).